The chain runs to 406 residues: Arginine biosynthesis bifunctional protein ArgJ (406 aa).

6 residues coordinate substrate: T152, K179, T190, E277, N401, and S406. Residue T190 is the Nucleophile of the active site.

The protein belongs to the ArgJ family. As to quaternary structure, heterotetramer of two alpha and two beta chains.

Its subcellular location is the cytoplasm. The enzyme catalyses N(2)-acetyl-L-ornithine + L-glutamate = N-acetyl-L-glutamate + L-ornithine. The catalysed reaction is L-glutamate + acetyl-CoA = N-acetyl-L-glutamate + CoA + H(+). It participates in amino-acid biosynthesis; L-arginine biosynthesis; L-ornithine and N-acetyl-L-glutamate from L-glutamate and N(2)-acetyl-L-ornithine (cyclic): step 1/1. Its pathway is amino-acid biosynthesis; L-arginine biosynthesis; N(2)-acetyl-L-ornithine from L-glutamate: step 1/4. Catalyzes two activities which are involved in the cyclic version of arginine biosynthesis: the synthesis of N-acetylglutamate from glutamate and acetyl-CoA as the acetyl donor, and of ornithine by transacetylation between N(2)-acetylornithine and glutamate. The polypeptide is Arginine biosynthesis bifunctional protein ArgJ (Neisseria gonorrhoeae (strain ATCC 700825 / FA 1090)).